Here is a 375-residue protein sequence, read N- to C-terminus: Type II restriction enzyme ApaLI (375 aa).

The catalysed reaction is Endonucleolytic cleavage of DNA to give specific double-stranded fragments with terminal 5'-phosphates.. Its function is as follows. A subtype P restriction enzyme that recognizes the double-stranded sequence 5'-GTGCAC-3' and cleaves after G-1. This chain is Type II restriction enzyme ApaLI, found in Acetobacter pasteurianus (Acetobacter turbidans).